Consider the following 109-residue polypeptide: Spermidine export protein MdtI (109 aa).

Transmembrane regions (helical) follow at residues Trp-6–Leu-26, Cys-36–Val-56, Ala-64–Phe-84, and Leu-88–Leu-108.

It belongs to the drug/metabolite transporter (DMT) superfamily. Small multidrug resistance (SMR) (TC 2.A.7.1) family. MdtI subfamily. Forms a complex with MdtJ.

The protein resides in the cell inner membrane. Catalyzes the excretion of spermidine. In Salmonella arizonae (strain ATCC BAA-731 / CDC346-86 / RSK2980), this protein is Spermidine export protein MdtI.